We begin with the raw amino-acid sequence, 23 residues long: Protein DCL, chloroplastic (23 aa).

It is found in the plastid. The protein resides in the chloroplast. Functionally, has a function in the early stage of chloroplast development and palisade cell morphogenesis. The sequence is that of Protein DCL, chloroplastic from Pseudotsuga menziesii (Douglas-fir).